The primary structure comprises 130 residues: 3-aminoacrylate deaminase RutC (130 aa).

Belongs to the RutC family.

It catalyses the reaction (Z)-3-aminoacrylate + H2O + H(+) = 3-oxopropanoate + NH4(+). In terms of biological role, involved in pyrimidine catabolism. Catalyzes the deamination of 3-aminoacrylate to malonic semialdehyde, a reaction that can also occur spontaneously. RutC may facilitate the reaction and modulate the metabolic fitness, rather than catalyzing essential functions. The chain is 3-aminoacrylate deaminase RutC from Methylorubrum extorquens (strain CM4 / NCIMB 13688) (Methylobacterium extorquens).